Here is an 860-residue protein sequence, read N- to C-terminus: Leucine--tRNA ligase (860 aa).

Residues 42-52 carry the 'HIGH' region motif; sequence PYPSGRLHMGH. Residues 619 to 623 carry the 'KMSKS' region motif; that stretch reads KMSKS. Lys622 is a binding site for ATP.

The protein belongs to the class-I aminoacyl-tRNA synthetase family.

The protein resides in the cytoplasm. The enzyme catalyses tRNA(Leu) + L-leucine + ATP = L-leucyl-tRNA(Leu) + AMP + diphosphate. The sequence is that of Leucine--tRNA ligase from Yersinia pestis bv. Antiqua (strain Angola).